The following is a 61-amino-acid chain: Aerolysin regulatory protein (61 aa).

The span at 1–14 (MMIKRHLPQPRHRE) shows a compositional bias: basic residues. Residues 1–61 (MMIKRHLPQP…GQTHTGPQIR (61 aa)) form a disordered region. Positions 51–61 (DGQTHTGPQIR) are enriched in polar residues.

Functionally, regulation of the expression of aerolysin. In Aeromonas sobria, this protein is Aerolysin regulatory protein (aerC).